Here is a 1979-residue protein sequence, read N- to C-terminus: Repetitive organellar protein (1979 aa).

Residues 1–12 are compositionally biased toward basic residues; it reads MVFTFKNKKKKK. 2 disordered regions span residues 1–42 and 54–116; these read MVFT…DSWY and TKYK…NNYS. 2 stretches are compositionally biased toward basic and acidic residues: residues 13-24 and 31-42; these read EASSDKVSKESF and NNEKREKSDSWY. The span at 68–114 shows a compositional bias: low complexity; sequence EDIINNNNNNNNDNNNDNNNDNNNDNNNDNNNDNNNENNNDNNNFNN. Coiled coils occupy residues 127–366, 412–666, 693–876, 992–1094, 1126–1307, and 1398–1467; these read DNEL…LKDE, LKVY…EMEL, LKES…KKKQ, KKKH…YKTI, VDKI…MNIK, and IANY…LTSQ.

The protein resides in the host cell membrane. This Plasmodium falciparum (isolate 3D7) protein is Repetitive organellar protein.